The sequence spans 513 residues: ATP synthase subunit alpha (513 aa).

169 to 176 is a binding site for ATP; the sequence is GDRQTGKT.

It belongs to the ATPase alpha/beta chains family. In terms of assembly, F-type ATPases have 2 components, CF(1) - the catalytic core - and CF(0) - the membrane proton channel. CF(1) has five subunits: alpha(3), beta(3), gamma(1), delta(1), epsilon(1). CF(0) has three main subunits: a(1), b(2) and c(9-12). The alpha and beta chains form an alternating ring which encloses part of the gamma chain. CF(1) is attached to CF(0) by a central stalk formed by the gamma and epsilon chains, while a peripheral stalk is formed by the delta and b chains.

The protein localises to the cell inner membrane. It carries out the reaction ATP + H2O + 4 H(+)(in) = ADP + phosphate + 5 H(+)(out). Functionally, produces ATP from ADP in the presence of a proton gradient across the membrane. The alpha chain is a regulatory subunit. The sequence is that of ATP synthase subunit alpha from Yersinia pseudotuberculosis serotype O:1b (strain IP 31758).